The chain runs to 197 residues: Protein shisa-4 (197 aa).

The N-terminal stretch at 1–27 (MPPAGLRRAAPLTAIALLVLGAPLVLA) is a signal peptide. Over 28–87 (GEDCLWYLDRNGSWHPGFNCEFFTFCCGTCYHRYCCRDLTLLITERQQKHCLAFSPKTIA) the chain is Extracellular. A helical membrane pass occupies residues 88–108 (GIASAVILFVAVVATTICCFL). Over 109–197 (CSCCYLYRRR…MPPQPSYPGA (89 aa)) the chain is Cytoplasmic.

The protein belongs to the shisa family.

The protein resides in the membrane. In Homo sapiens (Human), this protein is Protein shisa-4 (SHISA4).